Consider the following 178-residue polypeptide: Bifunctional protein PyrR (178 aa).

The PRPP-binding motif lies at 99–111 (IIIIDDVLYTCRT).

This sequence belongs to the purine/pyrimidine phosphoribosyltransferase family. PyrR subfamily. As to quaternary structure, homodimer and homohexamer; in equilibrium.

It catalyses the reaction UMP + diphosphate = 5-phospho-alpha-D-ribose 1-diphosphate + uracil. Regulates transcriptional attenuation of the pyrimidine nucleotide (pyr) operon by binding in a uridine-dependent manner to specific sites on pyr mRNA. This disrupts an antiterminator hairpin in the RNA and favors formation of a downstream transcription terminator, leading to a reduced expression of downstream genes. Its function is as follows. Also displays a weak uracil phosphoribosyltransferase activity which is not physiologically significant. This chain is Bifunctional protein PyrR, found in Clostridium beijerinckii (strain ATCC 51743 / NCIMB 8052) (Clostridium acetobutylicum).